The primary structure comprises 214 residues: 3-isopropylmalate dehydratase small subunit (214 aa).

It belongs to the LeuD family. LeuD type 1 subfamily. As to quaternary structure, heterodimer of LeuC and LeuD.

It catalyses the reaction (2R,3S)-3-isopropylmalate = (2S)-2-isopropylmalate. It participates in amino-acid biosynthesis; L-leucine biosynthesis; L-leucine from 3-methyl-2-oxobutanoate: step 2/4. Its function is as follows. Catalyzes the isomerization between 2-isopropylmalate and 3-isopropylmalate, via the formation of 2-isopropylmaleate. The polypeptide is 3-isopropylmalate dehydratase small subunit (Methylobacillus flagellatus (strain ATCC 51484 / DSM 6875 / VKM B-1610 / KT)).